Reading from the N-terminus, the 189-residue chain is Nucleolar protein 16 (189 aa).

A compositionally biased stretch (basic residues) spans Met-1–Ser-33. Residues Met-1–Lys-34 form a disordered region.

Belongs to the NOP16 family.

The protein resides in the nucleus. The protein localises to the nucleolus. The sequence is that of Nucleolar protein 16 from Caenorhabditis elegans.